A 513-amino-acid chain; its full sequence is Tyrosine-protein phosphatase non-receptor type substrate 1 (513 aa).

Residues 1-31 (MEPAGPAPGRLGPLLLCLLLSASCFCTGATG) form the signal peptide. An Ig-like V-type domain is found at 32 to 137 (KELKVTQPEK…SSEPDTEIQS (106 aa)). The Extracellular segment spans residues 32-373 (KELKVTQPEK…PDNNATHNWN (342 aa)). Residues Asn54, Asn92, Asn168, Asn180, Asn205, Asn209, Asn246, Asn271, Asn293, Asn302, Asn312, Asn320, Asn345, and Asn367 are each glycosylated (N-linked (GlcNAc...) asparagine). A disulfide bridge connects residues Cys55 and Cys121. 2 consecutive Ig-like C1-type domains span residues 149–248 (PSPP…ANLS) and 255–343 (PTVK…PAIT). The cysteines at positions 171 and 229 are disulfide-linked. Cys274 and Cys332 are disulfide-bonded. A helical membrane pass occupies residues 374 to 394 (VFIGVGVACALLVVLLMAALY). The Cytoplasmic portion of the chain corresponds to 395–511 (LLRIKQKKAK…FSEYASVQVQ (117 aa)). Tyr440 is subject to Phosphotyrosine; by Tyr-kinases. Residues 440–443 (YADL) carry the SH2-binding motif. Residues 444 to 513 (NLPKEKKPAP…EYASVQVQRK (70 aa)) are disordered. The SH3-binding motif lies at 450-455 (KPAPRA). Phosphotyrosine; by Tyr-kinases is present on residues Tyr464, Tyr481, and Tyr505. 3 consecutive short sequence motifs (SH2-binding) follow at residues 464-467 (YASI), 481-484 (YADL), and 505-508 (YASV). A compositionally biased stretch (polar residues) spans 504–513 (EYASVQVQRK).

In terms of assembly, binds PTPN11 when tyrosine-phosphorylated, except in macrophages, where it primarily binds PTPN6. Binds GRB2 vitro. Binds FGR. Binds JAK2 irrespective of its phosphorylation status and forms a stable complex. Binds SCAP1 and/or SCAP2. The resulting complex recruits FYB1. Binds PTK2B. Interacts with TRIM2. N-glycosylated. In terms of processing, phosphorylated on tyrosine residues. As to expression, highly expressed in cerebral cortex, brain, spinal cord, cerebellum and spleen, and at much lower levels in kidney, thymus, heart, lung and liver. Within the cerebellum, highly expressed throughout the molecular layer, and in synaptic glomeruli in the granule cell layer. Detected in neurons of the hippocampus and dentate gyrus, and in olfactory bulb. Not detected in Purkinje cells. Highly expressed in the plexiform layers, optic fiber layer and the outer segments of the photoreceptor layer in the retina. Highly expressed in macrophages. Isoform 3 is detected at very low levels in all tissues tested.

It is found in the membrane. Functionally, immunoglobulin-like cell surface receptor for CD47. Acts as a docking protein and induces translocation of PTPN6, PTPN11 and other binding partners from the cytosol to the plasma membrane. Supports adhesion of cerebellar neurons, neurite outgrowth and glial cell attachment. May play a key role in intracellular signaling during synaptogenesis and in synaptic function. Involved in the negative regulation of receptor tyrosine kinase-coupled cellular responses induced by cell adhesion, growth factors or insulin. Mediates negative regulation of phagocytosis, mast cell activation and dendritic cell activation. CD47 binding prevents maturation of immature dendritic cells and inhibits cytokine production by mature dendritic cells. Plays a role in antiviral immunity and limits new world arenavirus infection by decreasing virus internalization. Receptor for THBS1. Interaction with THBS1 stimulates phosphorylation of SIRPA. In response to THBS1, involved in ROS signaling in non-phagocytic cells, stimulating NADPH oxidase-derived ROS production. This Mus musculus (Mouse) protein is Tyrosine-protein phosphatase non-receptor type substrate 1 (Sirpa).